The sequence spans 71 residues: Phosphatidylinositol N-acetylglucosaminyltransferase ERI1 subunit (71 aa).

A run of 2 helical transmembrane segments spans residues 5 to 25 and 35 to 55; these read VAAT…LWCL and LYYW…CVIS.

Interacts with GPI2, suggesting that it is a component of the GPI-GnT complex, probably composed of GPI1, GPI2, GPI3, GPI15, and ERI1.

It localises to the endoplasmic reticulum membrane. It functions in the pathway glycolipid biosynthesis; glycosylphosphatidylinositol-anchor biosynthesis. Functionally, probable component of the GPI-GlcNAc transferase (GPI-GnT) complex in the endoplasmic reticulum, a complex that catalyzes transfer of GlcNAc from UDP-GlcNAc to an acceptor phosphatidylinositol, the first step in the production of GPI-anchors for cell surface proteins. The protein is Phosphatidylinositol N-acetylglucosaminyltransferase ERI1 subunit (ERI1) of Eremothecium gossypii (strain ATCC 10895 / CBS 109.51 / FGSC 9923 / NRRL Y-1056) (Yeast).